We begin with the raw amino-acid sequence, 139 residues long: Transcription antitermination protein NusB (139 aa).

This sequence belongs to the NusB family.

Functionally, involved in transcription antitermination. Required for transcription of ribosomal RNA (rRNA) genes. Binds specifically to the boxA antiterminator sequence of the ribosomal RNA (rrn) operons. This Cronobacter sakazakii (strain ATCC BAA-894) (Enterobacter sakazakii) protein is Transcription antitermination protein NusB.